A 120-amino-acid polypeptide reads, in one-letter code: uncharacterized protein (120 aa).

This is an uncharacterized protein from Mycoplasma pneumoniae (strain ATCC 29342 / M129 / Subtype 1) (Mycoplasmoides pneumoniae).